A 179-amino-acid chain; its full sequence is Cytoglobin-2 (179 aa).

A Globin domain is found at 18–167; it reads PLSDAEMEII…VYWHVTGAYT (150 aa). Heme b is bound by residues histidine 81 and histidine 113.

It belongs to the globin family. As to quaternary structure, monomeric.

It is found in the cytoplasm. The protein localises to the nucleus. The enzyme catalyses Fe(II)-heme b-[protein] + nitric oxide + O2 = Fe(III)-heme b-[protein] + nitrate. It carries out the reaction Fe(III)-heme b-[protein] + nitric oxide + H2O = Fe(II)-heme b-[protein] + nitrite + 2 H(+). It catalyses the reaction 2 superoxide + 2 H(+) = H2O2 + O2. The catalysed reaction is H2O2 + AH2 = A + 2 H2O. Its function is as follows. Probable multifunctional globin with a hexacoordinated heme iron required for the catalysis of various reactions depending on redox condition of the cell as well as oxygen availability. Has a nitric oxide dioxygenase (NOD) activity and is most probably involved in cell-mediated and oxygen-dependent nitric oxide consumption. Under normoxic conditions functions as a nitric oxide dioxygenase (NOD) but under hypoxic conditions the globin may switch its function to that of a nitrite (NO2) reductase (NiR), generating nitric oxide. Could also have peroxidase and superoxide dismutase activities, detoxifying reactive oxygen species and protecting cells against oxidative stress. Also binds dioxygen with low affinity and could function as an oxygen sensor but has probably no function as a respiratory oxygen carrier. The protein is Cytoglobin-2 of Oryzias latipes (Japanese rice fish).